The following is a 252-amino-acid chain: Imidazole glycerol phosphate synthase subunit HisF (252 aa).

Active-site residues include aspartate 13 and aspartate 132.

The protein belongs to the HisA/HisF family. In terms of assembly, heterodimer of HisH and HisF.

The protein localises to the cytoplasm. It carries out the reaction 5-[(5-phospho-1-deoxy-D-ribulos-1-ylimino)methylamino]-1-(5-phospho-beta-D-ribosyl)imidazole-4-carboxamide + L-glutamine = D-erythro-1-(imidazol-4-yl)glycerol 3-phosphate + 5-amino-1-(5-phospho-beta-D-ribosyl)imidazole-4-carboxamide + L-glutamate + H(+). It participates in amino-acid biosynthesis; L-histidine biosynthesis; L-histidine from 5-phospho-alpha-D-ribose 1-diphosphate: step 5/9. Functionally, IGPS catalyzes the conversion of PRFAR and glutamine to IGP, AICAR and glutamate. The HisF subunit catalyzes the cyclization activity that produces IGP and AICAR from PRFAR using the ammonia provided by the HisH subunit. The chain is Imidazole glycerol phosphate synthase subunit HisF from Campylobacter fetus subsp. fetus (strain 82-40).